The following is a 263-amino-acid chain: Hydroxyacylglutathione hydrolase (263 aa).

His-56, His-58, Asp-60, His-61, His-115, Asp-135, and His-175 together coordinate Zn(2+).

Belongs to the metallo-beta-lactamase superfamily. Glyoxalase II family. As to quaternary structure, monomer. It depends on Zn(2+) as a cofactor.

It catalyses the reaction an S-(2-hydroxyacyl)glutathione + H2O = a 2-hydroxy carboxylate + glutathione + H(+). It participates in secondary metabolite metabolism; methylglyoxal degradation; (R)-lactate from methylglyoxal: step 2/2. Thiolesterase that catalyzes the hydrolysis of S-D-lactoyl-glutathione to form glutathione and D-lactic acid. The chain is Hydroxyacylglutathione hydrolase from Polaromonas sp. (strain JS666 / ATCC BAA-500).